Reading from the N-terminus, the 443-residue chain is uncharacterized protein (443 aa).

10 helical membrane passes run 7-29 (VSLYISFVLIICALSKNIMMLNT), 68-87 (YISSYSYILYTYVLFISIFT), 94-111 (VLSLFLKVIYIYSLYAIF), 121-143 (VTLFTFFILAFLMCSSSTLSMFA), 150-164 (IVIIFLPFLVYSLTC), 179-201 (IISTAKNQFILTPLIVYSYYIFF), 206-225 (LIIKSVICVVCLLASIFAIS), 358-375 (IRFISLLLFFIASIFIRN), 382-399 (LFVVSLFGISQFYVSFFG), and 409-431 (LFGMYFSFDLCLYITVVFLIYKI).

The protein resides in the cell membrane. This is an uncharacterized protein from Escherichia coli (strain K12).